A 628-amino-acid chain; its full sequence is MSSEDLQDHHEIGNEVIKKKGVYTKKKCQDCFFLILFLLFWAGMIVVAAFGVKNGKPDRIVKGTDQYGNICGVNNIEQGILNETQARDTTNEPYVYFIYYPDLIGINYRVICIEECPNSTYTDLNDPNQLICDYGTVPATNQISPNGTCMGKIKSKLIFNRCIPDVTNTSVVLNSIVDEIYQFVNNQLTSDLSVEILTDLTNSWRYLIYGALIAMGLGLTWIFLLRFFAGFITWLTVFAAYACLGLLTAQVYFQWQDSKDAYENTIPSQRLVMQEKNILALKVIFIILCVVCGIFALILLALFSRIRIAIRIIKECSRAIGIMPSIFFFPIFIFLLLCGFTVYWVYIGVYLATAGSPTYDDQYRFTGYEADSKLQKIQIYHFFGYLWTFAFILALNQTTIAGAISSWYWVQDKKDTPFFPVWSSFFRVIRYHLGSIALGSLILAIVQFIRWVLRFLEKKFKGKEAYLARFIVRCLNCIFGCFERFIKFLDKNAYIMVSIYGYSFCQGAKRGFQLVLTNILRVAAVNLVSSFLMFLGRVFITAATVGISLYLLKEHENLSFYIIPVILIGFIAFAISTGFMSVYDMSIDTMLLCFCEDCERNDGSPERPYYMSKSLRKFVDGKGRSKCC.

Residues 1-31 (MSSEDLQDHHEIGNEVIKKKGVYTKKKCQDC) lie on the Cytoplasmic side of the membrane. A helical membrane pass occupies residues 32 to 52 (FFLILFLLFWAGMIVVAAFGV). Residues 53-204 (KNGKPDRIVK…EILTDLTNSW (152 aa)) lie on the Extracellular side of the membrane. Residues Asn-82, Asn-118, Asn-146, and Asn-168 are each glycosylated (N-linked (GlcNAc...) asparagine). Residues 205–225 (RYLIYGALIAMGLGLTWIFLL) form a helical membrane-spanning segment. Position 226 (Arg-226) is a topological domain, cytoplasmic. The helical transmembrane segment at 227–247 (FFAGFITWLTVFAAYACLGLL) threads the bilayer. The Extracellular segment spans residues 248–282 (TAQVYFQWQDSKDAYENTIPSQRLVMQEKNILALK). A helical transmembrane segment spans residues 283-303 (VIFIILCVVCGIFALILLALF). Residues 304–319 (SRIRIAIRIIKECSRA) lie on the Cytoplasmic side of the membrane. The chain crosses the membrane as a helical span at residues 320–340 (IGIMPSIFFFPIFIFLLLCGF). At 341 to 381 (TVYWVYIGVYLATAGSPTYDDQYRFTGYEADSKLQKIQIYH) the chain is on the extracellular side. A helical membrane pass occupies residues 382-402 (FFGYLWTFAFILALNQTTIAG). The Cytoplasmic portion of the chain corresponds to 403–432 (AISSWYWVQDKKDTPFFPVWSSFFRVIRYH). Residues 433-453 (LGSIALGSLILAIVQFIRWVL) form a helical membrane-spanning segment. The Extracellular segment spans residues 454–530 (RFLEKKFKGK…RVAAVNLVSS (77 aa)). Residues 531–551 (FLMFLGRVFITAATVGISLYL) traverse the membrane as a helical segment. The Cytoplasmic portion of the chain corresponds to 552–559 (LKEHENLS). Residues 560–580 (FYIIPVILIGFIAFAISTGFM) traverse the membrane as a helical segment. At 581–628 (SVYDMSIDTMLLCFCEDCERNDGSPERPYYMSKSLRKFVDGKGRSKCC) the chain is on the extracellular side.

The protein belongs to the CTL (choline transporter-like) family.

It localises to the cell membrane. Its subcellular location is the mitochondrion outer membrane. It carries out the reaction choline(out) + n H(+)(in) = choline(in) + n H(+)(out). It catalyses the reaction ethanolamine(out) + n H(+)(in) = ethanolamine(in) + n H(+)(out). Its function is as follows. Choline/H+ antiporter, mainly in mitochodria. Also acts as a low-affinity ethanolamine/H+ antiporter, regulating the supply of extracellular ethanolamine (Etn) for the CDP-Etn pathway, redistribute intracellular Etn and balance the CDP-Cho and CDP-Etn arms of the Kennedy pathway. This Dictyostelium discoideum (Social amoeba) protein is Choline transporter-like protein 2 (slc44a2).